Here is a 53-residue protein sequence, read N- to C-terminus: ATSYTLNEVVPLKEFVPEWVRIGFSATTGAEFAAHEVLSWSFHSELAGTSSSN.

This sequence belongs to the leguminous lectin family. In terms of assembly, tetramer of two alpha and two beta chains.

This Lathyrus clymenum (Spanish vetchling) protein is Lectin alpha chain.